The following is a 283-amino-acid chain: Thymidylate synthase (283 aa).

Arginine 22 is a dUMP binding site. Cysteine 160 serves as the catalytic Nucleophile. DUMP contacts are provided by residues 180–183 (RSCD), asparagine 191, and 221–223 (HIY). Aspartate 183 provides a ligand contact to (6R)-5,10-methylene-5,6,7,8-tetrahydrofolate. Serine 282 serves as a coordination point for (6R)-5,10-methylene-5,6,7,8-tetrahydrofolate.

This sequence belongs to the thymidylate synthase family. Bacterial-type ThyA subfamily. Homodimer.

The protein resides in the cytoplasm. The catalysed reaction is dUMP + (6R)-5,10-methylene-5,6,7,8-tetrahydrofolate = 7,8-dihydrofolate + dTMP. Its pathway is pyrimidine metabolism; dTTP biosynthesis. In terms of biological role, catalyzes the reductive methylation of 2'-deoxyuridine-5'-monophosphate (dUMP) to 2'-deoxythymidine-5'-monophosphate (dTMP) while utilizing 5,10-methylenetetrahydrofolate (mTHF) as the methyl donor and reductant in the reaction, yielding dihydrofolate (DHF) as a by-product. This enzymatic reaction provides an intracellular de novo source of dTMP, an essential precursor for DNA biosynthesis. This Shewanella piezotolerans (strain WP3 / JCM 13877) protein is Thymidylate synthase.